Consider the following 188-residue polypeptide: Photosystem I assembly protein Ycf4 (188 aa).

The next 2 membrane-spanning stretches (helical) occupy residues 22–42 and 68–88; these read LGWA…GLSS and LVMC…WCAI.

Belongs to the Ycf4 family.

It is found in the plastid. Its subcellular location is the chloroplast thylakoid membrane. Functionally, seems to be required for the assembly of the photosystem I complex. This chain is Photosystem I assembly protein Ycf4, found in Zygnema circumcarinatum (Green alga).